Reading from the N-terminus, the 591-residue chain is Transcriptional regulator PUL4 (591 aa).

The zn(2)-C6 fungal-type DNA-binding region spans 3–29 (CLECKKRKQKCDGQKPCRRCTKLNVKC).

Its subcellular location is the nucleus. In terms of biological role, transcription factor involved in regulation of the PUL gene cluster that mediates the formation of pulcherrimin, a red iron-containing pigment composed of two cyclized and modified leucine molecules that acts as a siderophore, a chelator that binds iron outside the cell for subsequent uptake. In Kluyveromyces lactis (strain ATCC 8585 / CBS 2359 / DSM 70799 / NBRC 1267 / NRRL Y-1140 / WM37) (Yeast), this protein is Transcriptional regulator PUL4.